The sequence spans 1166 residues: Zinc finger CCHC domain-containing protein 2 (1166 aa).

Disordered regions lie at residues 1–85 (MLRM…GGHA), 205–240 (RAEG…CAKL), 550–668 (SSAD…ARFS), and 904–982 (PASF…ISAV). Pro residues predominate over residues 43-64 (PPPPPTGLPRGPPPPPSPPRGL). Over residues 65–76 (EPPVASGPTAGA) the composition is skewed to low complexity. Positions 214–223 (EDEPSGDGEQ) are enriched in acidic residues. Basic and acidic residues predominate over residues 572–587 (PQVEKEKVKKTEDRLN). Low complexity predominate over residues 624–633 (SSESYSSPSS). A compositionally biased stretch (basic and acidic residues) spans 634-653 (PRHDGRESLESEEEKDRDSD). Positions 919–947 (LPTQNSSALNAATSAQPASTGISPSQSTV) are enriched in polar residues. Over residues 949-963 (PAVPTHTPGPAPSPS) the composition is skewed to pro residues. Residues 964–982 (PALTHSTAQSDSTSYISAV) are compositionally biased toward polar residues. The segment at 1119–1136 (VSCYNCGVSGHYAQDCKQ) adopts a CCHC-type zinc-finger fold.

The chain is Zinc finger CCHC domain-containing protein 2 (Zcchc2) from Mus musculus (Mouse).